A 373-amino-acid chain; its full sequence is Enoyl-[acyl-carrier-protein] reductase, mitochondrial (373 aa).

The transit peptide at 1-53 (MWVCGALCRTRAPAQLGQRLLPESRRRRPASASFSASAEPSRVRALVYGHHGD) directs the protein to the mitochondrion. Lys61 is subject to N6-acetyllysine; alternate. Residue Lys61 is modified to N6-succinyllysine; alternate. The active-site Proton donor is Tyr94. NADP(+)-binding positions include Asn167, 193–196 (NSGV), and 216–218 (RDT). Lys252 and Lys267 each carry N6-acetyllysine; alternate. Residues Lys252 and Lys267 each carry the N6-succinyllysine; alternate modification. Residues 285-288 (YGGM) and 310-312 (FWL) contribute to the NADP(+) site. Lys316 bears the N6-succinyllysine mark. An NADP(+)-binding site is contributed by Lys368.

It belongs to the zinc-containing alcohol dehydrogenase family. Quinone oxidoreductase subfamily. As to quaternary structure, homodimer.

The protein localises to the mitochondrion. The catalysed reaction is a 2,3-saturated acyl-[ACP] + NADP(+) = a (2E)-enoyl-[ACP] + NADPH + H(+). It carries out the reaction (2E)-butenoyl-[ACP] + NADPH + H(+) = butanoyl-[ACP] + NADP(+). It catalyses the reaction (2E)-hexenoyl-[ACP] + NADPH + H(+) = hexanoyl-[ACP] + NADP(+). The enzyme catalyses (2E)-octenoyl-[ACP] + NADPH + H(+) = octanoyl-[ACP] + NADP(+). The catalysed reaction is (2E)-decenoyl-[ACP] + NADPH + H(+) = decanoyl-[ACP] + NADP(+). It carries out the reaction (2E)-dodecenoyl-[ACP] + NADPH + H(+) = dodecanoyl-[ACP] + NADP(+). It catalyses the reaction (2E)-tetradecenoyl-[ACP] + NADPH + H(+) = tetradecanoyl-[ACP] + NADP(+). The enzyme catalyses (2E)-hexadecenoyl-[ACP] + NADPH + H(+) = hexadecanoyl-[ACP] + NADP(+). Catalyzes the NADPH-dependent reduction of trans-2-enoyl thioesters in mitochondrial fatty acid synthesis (fatty acid synthesis type II). Fatty acid chain elongation in mitochondria uses acyl carrier protein (ACP) as an acyl group carrier, but the enzyme accepts both ACP and CoA thioesters as substrates in vitro. Displays a preference for medium-chain over short- and long-chain substrates. May provide the octanoyl chain used for lipoic acid biosynthesis, regulating protein lipoylation and mitochondrial respiratory activity particularly in Purkinje cells. Involved in iron homeostasis; affecting Fe-S cluster assembly and ceramide metabolism. Required for proper morphology and bioenergetic functions of mitochondria. Required for maintenance of neurons. This is Enoyl-[acyl-carrier-protein] reductase, mitochondrial (MECR) from Bos taurus (Bovine).